The following is a 387-amino-acid chain: Double C2-like domain-containing protein gamma (387 aa).

C2 domains lie at 83 to 209 (ALGT…DICL) and 243 to 376 (ERGR…ELWH). D274, D280, D334, D336, and D342 together coordinate Ca(2+).

Ca(2+) serves as cofactor.

May be involved in regulation of vesicular trafficking. In vitro, does not bind calcium and phospholipids. The protein is Double C2-like domain-containing protein gamma (Doc2g) of Mus musculus (Mouse).